The following is a 495-amino-acid chain: Thioredoxin reductase SEP1 (495 aa).

37 to 54 (DFVKPSPPGTTWGLGGTC) provides a ligand contact to FAD. Cysteines 54 and 59 form a disulfide. Histidine 468 serves as the catalytic Proton acceptor. The cysteinyl-selenocysteine (Cys-Sec) cross-link spans 493–494 (CU). Selenocysteine 494 is a non-standard amino acid (selenocysteine).

This sequence belongs to the class-I pyridine nucleotide-disulfide oxidoreductase family. As to quaternary structure, homodimer. Requires FAD as cofactor. In terms of processing, the N-terminus is blocked.

The catalysed reaction is [thioredoxin]-dithiol + NADP(+) = [thioredoxin]-disulfide + NADPH + H(+). With respect to regulation, activity was very low in selenium-depleted cells, but increased 4-fold to the same level as in selenium-sufficient cells for 70 hours after the addition of 10 nm selenite. The polypeptide is Thioredoxin reductase SEP1 (SEP1) (Emiliania huxleyi (Coccolithophore)).